Consider the following 706-residue polypeptide: Polyribonucleotide nucleotidyltransferase (706 aa).

Aspartate 487 and aspartate 493 together coordinate Mg(2+). The 60-residue stretch at 553-612 (PRLFTMKISQDKIRDVIGKGGETIRSITAETGTEINIAEDGTITIAATTQEAGDAAKKRI) folds into the KH domain. In terms of domain architecture, S1 motif spans 622 to 692 (GKVYEGTVVK…DRGRVRLSIK (71 aa)).

Belongs to the polyribonucleotide nucleotidyltransferase family. Requires Mg(2+) as cofactor.

Its subcellular location is the cytoplasm. The catalysed reaction is RNA(n+1) + phosphate = RNA(n) + a ribonucleoside 5'-diphosphate. Functionally, involved in mRNA degradation. Catalyzes the phosphorolysis of single-stranded polyribonucleotides processively in the 3'- to 5'-direction. This chain is Polyribonucleotide nucleotidyltransferase, found in Neisseria gonorrhoeae (strain ATCC 700825 / FA 1090).